The chain runs to 253 residues: MWIGVISLFPEMFNAITEYGVTGRAIRNGLIDFHLWNPRDFTHDKHRTVDDRPYGGGPGMLMMVQPLRDAIAAARKAAEVNGGKAKVIYLSPQGRKLDQQGVSELAQHDRLVFIAGRYEGIDERLIASDIDEEWSVGDYILSGGELPAMNVIDAVARLVPGVLGHKESAEQDSFSNGLLDCPHYTRPEVLTTPQGDEMSVPKVLLSGNHEHIRLWRQEQSLLRTWTRRPELLNNLALTAEQEKALTLIKKQVK.

S-adenosyl-L-methionine-binding positions include Gly116 and 136–141 (VGDYIL).

Belongs to the RNA methyltransferase TrmD family. Homodimer.

It localises to the cytoplasm. The catalysed reaction is guanosine(37) in tRNA + S-adenosyl-L-methionine = N(1)-methylguanosine(37) in tRNA + S-adenosyl-L-homocysteine + H(+). Its function is as follows. Specifically methylates guanosine-37 in various tRNAs. This chain is tRNA (guanine-N(1)-)-methyltransferase, found in Colwellia psychrerythraea (strain 34H / ATCC BAA-681) (Vibrio psychroerythus).